The sequence spans 172 residues: Shikimate kinase 2 (172 aa).

9-16 provides a ligand contact to ATP; it reads GARAAGKT.

It belongs to the shikimate kinase family.

It is found in the cytoplasm. The catalysed reaction is shikimate + ATP = 3-phosphoshikimate + ADP + H(+). It participates in metabolic intermediate biosynthesis; chorismate biosynthesis; chorismate from D-erythrose 4-phosphate and phosphoenolpyruvate: step 5/7. This is Shikimate kinase 2 from Syntrophotalea carbinolica (strain DSM 2380 / NBRC 103641 / GraBd1) (Pelobacter carbinolicus).